The following is a 254-amino-acid chain: UPF0173 protein YddR (254 aa).

It belongs to the UPF0173 family.

The chain is UPF0173 protein YddR (yddR) from Bacillus subtilis (strain 168).